A 1213-amino-acid polypeptide reads, in one-letter code: Probable ATP-binding protein BrxC (1213 aa).

The protein belongs to the BrxC family.

In terms of biological role, BREX systems (bacteriophage exclusion) provide immunity against bacteriophage. Part of a type 1 BREX system which protects against dsDNA phage. This system allows phage adsorption but prevents phage DNA replication, without degradation of the phage DNA. Methylation of bacterial DNA by PglX guides self/non-self discrimination. When the brxA-brxB-brxC-pglX-pglZ-brxL genes are transformed into a susceptible E.coli strain (BW25113) they confer very high resistance to infection by bacteriophage VR7 and VpaE1, about 100-fold protection against lambda, T5 and T7 and no protection against RNA phage Qbeta, ssDNA phage M13 or dSDNA phage T4 and VR5. Glycosylated phage DNA is not susceptible to BREX. The BREX system does not confer resistance to lysogenic lambda phage, i.e. prophage that are integrated into the chromosomal DNA and then induced to form phage. The protein is Probable ATP-binding protein BrxC of Escherichia coli O9:H4 (strain HS).